Here is a 201-residue protein sequence, read N- to C-terminus: Small ribosomal subunit protein uS4 (201 aa).

The interval Met1–Lys42 is disordered. Residues Ser91–Ala157 form the S4 RNA-binding domain.

This sequence belongs to the universal ribosomal protein uS4 family. As to quaternary structure, part of the 30S ribosomal subunit. Contacts protein S5. The interaction surface between S4 and S5 is involved in control of translational fidelity.

One of the primary rRNA binding proteins, it binds directly to 16S rRNA where it nucleates assembly of the body of the 30S subunit. In terms of biological role, with S5 and S12 plays an important role in translational accuracy. This chain is Small ribosomal subunit protein uS4, found in Mycolicibacterium smegmatis (strain ATCC 700084 / mc(2)155) (Mycobacterium smegmatis).